The following is an 865-amino-acid chain: DNA mismatch repair protein MutS (865 aa).

605-612 (GPNMAGKS) contributes to the ATP binding site. A disordered region spans residues 814–833 (PEPLEAYKPKGNKQPLSDEE).

Belongs to the DNA mismatch repair MutS family.

Its function is as follows. This protein is involved in the repair of mismatches in DNA. It is possible that it carries out the mismatch recognition step. This protein has a weak ATPase activity. In Halalkalibacterium halodurans (strain ATCC BAA-125 / DSM 18197 / FERM 7344 / JCM 9153 / C-125) (Bacillus halodurans), this protein is DNA mismatch repair protein MutS.